The chain runs to 1311 residues: Cyclin-G-associated kinase (1311 aa).

An N-acetylserine modification is found at S2. Residues S2 and S16 each carry the phosphoserine modification. The region spanning 40 to 314 is the Protein kinase domain; sequence LRVRRVLAEG…SIAEVVHQLQ (275 aa). D173 serves as the catalytic Proton acceptor. The 168-residue stretch at 399–566 folds into the Phosphatase tensin-type domain; that stretch reads SVANYAKGDL…EYMCDMVAEE (168 aa). Phosphoserine is present on S456. One can recognise a C2 tensin-type domain in the interval 572–710; sequence SKPILVRAVV…FQVNLEVEVE (139 aa). Disordered stretches follow at residues 709–729 and 749–788; these read VEPR…SMRG and FGKP…SADA. S770 bears the Phosphoserine mark. Low complexity predominate over residues 770-788; sequence SPEAEPTDSDSPPSSSADA. T776 carries the phosphothreonine modification. Residue S783 is modified to Phosphoserine. T794 carries the phosphothreonine modification. 3 disordered regions span residues 801–860, 913–1035, and 1047–1150; these read KEAE…VQQD, CLLG…DLLG, and AVAP…PNYA. Phosphoserine is present on residues S811, S826, S829, S834, and S939. Composition is skewed to low complexity over residues 925–939 and 950–966; these read PPED…LLAS and PRGG…PLLP. 2 stretches are compositionally biased toward polar residues: residues 967 to 976 and 1070 to 1080; these read SSGNNSQPCS and SQASWTKSQNP. S1096 is modified (phosphoserine). The segment covering 1109–1124 has biased composition (polar residues); sequence TATTPKGSSSWQTSRP. The residue at position 1123 (R1123) is an Omega-N-methylarginine. Residues S1176 and S1185 each carry the phosphoserine modification. Residues 1247-1311 form the J domain; the sequence is SRWTPVGMAD…FENQGSRPLF (65 aa).

It belongs to the protein kinase superfamily. Ser/Thr protein kinase family. As to expression, ubiquitous. Highest in testis.

The protein resides in the cytoplasm. It localises to the perinuclear region. The protein localises to the golgi apparatus. It is found in the trans-Golgi network. Its subcellular location is the cell junction. The protein resides in the focal adhesion. It localises to the cytoplasmic vesicle. The protein localises to the clathrin-coated vesicle. The catalysed reaction is L-seryl-[protein] + ATP = O-phospho-L-seryl-[protein] + ADP + H(+). It catalyses the reaction L-threonyl-[protein] + ATP = O-phospho-L-threonyl-[protein] + ADP + H(+). Associates with cyclin G and CDK5. Seems to act as an auxilin homolog that is involved in the uncoating of clathrin-coated vesicles by Hsc70 in non-neuronal cells. Expression oscillates slightly during the cell cycle, peaking at G1. May play a role in clathrin-mediated endocytosis and intracellular trafficking, and in the dynamics of clathrin assembly/disassembly. The polypeptide is Cyclin-G-associated kinase (Homo sapiens (Human)).